We begin with the raw amino-acid sequence, 839 residues long: Phosphatidylinositol-glycan-specific phospholipase D (839 aa).

Residues 1–23 (MSAFRFWSGLLMLLGFLCPRSSP) form the signal peptide. Residues N94, N271, N292, N307, and N321 are each glycosylated (N-linked (GlcNAc...) asparagine). FG-GAP repeat units lie at residues 365–427 (SSPA…GLPR), 434–496 (KEAH…GQLS), 498–558 (SPNV…YSSR), 562–622 (NVEA…SPGR), 632–692 (QSWF…GSTR), 703–769 (SLLS…TVGD), and 787–839 (QYVL…LGQD). Residues N500, N590, and N658 are each glycosylated (N-linked (GlcNAc...) asparagine).

It belongs to the GPLD1 family. As to quaternary structure, monomer. Glycosylated.

It is found in the secreted. It catalyses the reaction a 6-(alpha-D-glucosaminyl)-1-(1,2-diacyl-sn-glycero-3-phospho)-1D-myo-inositol + H2O = 6-(alpha-D-glucosaminyl)-1D-myo-inositol + a 1,2-diacyl-sn-glycero-3-phosphate + H(+). In terms of biological role, this protein hydrolyzes the inositol phosphate linkage in proteins anchored by phosphatidylinositol glycans (GPI-anchor) thus releasing these proteins from the membrane. This chain is Phosphatidylinositol-glycan-specific phospholipase D (GPLD1), found in Bos taurus (Bovine).